The primary structure comprises 338 residues: Bacteriochlorophyllide d C-20 methyltransferase (338 aa).

E147 is an S-adenosyl-L-methionine binding site. Residue H150 coordinates substrate. S-adenosyl-L-methionine is bound by residues G177, N200, 227-228 (DI), and 242-243 (CR). Y246 functions as the Nucleophile in the catalytic mechanism. Residue H290 participates in a bacteriochlorophyll d binding.

It belongs to the class I-like SAM-binding methyltransferase superfamily. Cation-independent O-methyltransferase family. As to quaternary structure, homodimer.

The catalysed reaction is a bacteriochlorophyllide d + S-adenosyl-L-methionine = a bacteriochlorophyllide c + S-adenosyl-L-homocysteine + H(+). It functions in the pathway porphyrin-containing compound metabolism; bacteriochlorophyll biosynthesis (light-independent). Involved in the biosynthesis of the major light-harvesting pigment bacteriochlorophyll c (BChlc), which confers a significant competitive advantage to green sulfur bacteria living at limiting red and near-infrared light intensities. Catalyzes the methylation at the C-20 position of the cyclic tetrapyrrole chlorin of bacteriochlorophyll d (BChld) to produce bacteriochlorophyll c (BChlc) using S-adenosylmethionine (SAM) as a methyl source. The polypeptide is Bacteriochlorophyllide d C-20 methyltransferase (Chlorobaculum tepidum (strain ATCC 49652 / DSM 12025 / NBRC 103806 / TLS) (Chlorobium tepidum)).